A 1001-amino-acid chain; its full sequence is Ulvan lyase, long isoform (1001 aa).

A signal peptide spans 1 to 21 (MNGLKMLLFSTTLLTAFTLHA). 126-127 (SH) is a binding site for substrate. The active-site Proton donor/acceptor is the H127. The Ca(2+) site is built by D189, D199, and K201. Substrate is bound by residues Y280 and R297. 3 residues coordinate Ca(2+): D300, D303, and Y305. Y361 lines the substrate pocket.

This sequence belongs to the polysaccharide lyase 24 family.

Ulvan lyase involved in ulvan degradation. Ulvan is the main polysaccharide component of the Ulvales (green seaweed) cell wall. It is composed of disaccharide building blocks comprising 3-sulfated rhamnose (Rha3S) linked to D-glucuronic acid (GlcA), L-iduronic acid (IduA), or D-xylose (Xyl). Ulvan lyase catalyzes preferentially the endolytic cleavage of the glycosidic bond between Rha3S and the uronic acid GlcA, but not IduA, producing oligosaccharides that have unsaturated 4-deoxy-L-threo-hex-4-enopyranosiduronic acid (deltaUA) at the non-reducing end. The most abundant end products in the degradation of the ulvan polysaccharide were deltaUA-Rha3S disaccharides and deltaUA-Rha3S-IduA-Rha3S and deltaUA-Rha3S-Xyl-Rha3S tetrasaccharides. This Pseudoalteromonas sp. (strain PLSV) protein is Ulvan lyase, long isoform.